Consider the following 30-residue polypeptide: Cysteine-rich venom protein mossambin (30 aa).

Positions asparagine 1 to asparagine 30 are disordered.

This sequence belongs to the CRISP family. Contains 8 disulfide bonds. In terms of tissue distribution, expressed by the venom gland.

The protein resides in the secreted. Its function is as follows. Inhibits calcium-activated potassium channels (KCa), voltage-gated potassium channel (Kv), and the calcium release channel/ryanodine receptor (RyR). This chain is Cysteine-rich venom protein mossambin, found in Naja mossambica (Mozambique spitting cobra).